Reading from the N-terminus, the 229-residue chain is MSVSLSRLERQLGYTFKDQELMILALTHRSFAGRNNERLEFLGDAILNFVAGEALFERFPQAREGQLSRLRARLVKGETLALLARGFDLGEYLRLGSGELKSGGFRRESILADALEALIGAIYLDAGMEAARERVLAWLTTEFDSLTLVDTNKDPKTRLQEFLQSRACDLPRYEVVDIQGEPHCRTFFVECEINLLNEKSRGQGVSRRIAEQVAAAAALIALGVENGHE.

One can recognise an RNase III domain in the interval 5–127 (LSRLERQLGY…LIGAIYLDAG (123 aa)). Position 40 (Glu-40) interacts with Mg(2+). The active site involves Asp-44. Mg(2+) is bound by residues Asp-113 and Glu-116. The active site involves Glu-116. One can recognise a DRBM domain in the interval 154–224 (DPKTRLQEFL…AAAALIALGV (71 aa)).

This sequence belongs to the ribonuclease III family. Homodimer. Mg(2+) serves as cofactor.

Its subcellular location is the cytoplasm. It carries out the reaction Endonucleolytic cleavage to 5'-phosphomonoester.. Its function is as follows. Digests double-stranded RNA. Involved in the processing of primary rRNA transcript to yield the immediate precursors to the large and small rRNAs (23S and 16S). Processes some mRNAs, and tRNAs when they are encoded in the rRNA operon. Processes pre-crRNA and tracrRNA of type II CRISPR loci if present in the organism. The protein is Ribonuclease 3 of Pseudomonas syringae pv. tomato (strain ATCC BAA-871 / DC3000).